The primary structure comprises 508 residues: Photosystem II CP47 reaction center protein (508 aa).

Helical transmembrane passes span 21-36 (SVHIMHTALVAGWAGS), 101-115 (IMFSGLCFLAAIWHW), 140-156 (GIHLFLAGVACFGFGAF), 203-218 (IAAGTLGILAGLFHLS), 237-252 (VLSSSIAAVFFAAFVV), and 457-472 (SFALLFFFGHIWHGAR).

This sequence belongs to the PsbB/PsbC family. PsbB subfamily. As to quaternary structure, PSII is composed of 1 copy each of membrane proteins PsbA, PsbB, PsbC, PsbD, PsbE, PsbF, PsbH, PsbI, PsbJ, PsbK, PsbL, PsbM, PsbT, PsbX, PsbY, PsbZ, Psb30/Ycf12, at least 3 peripheral proteins of the oxygen-evolving complex and a large number of cofactors. It forms dimeric complexes. Requires Binds multiple chlorophylls. PSII binds additional chlorophylls, carotenoids and specific lipids. as cofactor.

Its subcellular location is the plastid. It is found in the chloroplast thylakoid membrane. In terms of biological role, one of the components of the core complex of photosystem II (PSII). It binds chlorophyll and helps catalyze the primary light-induced photochemical processes of PSII. PSII is a light-driven water:plastoquinone oxidoreductase, using light energy to abstract electrons from H(2)O, generating O(2) and a proton gradient subsequently used for ATP formation. The protein is Photosystem II CP47 reaction center protein of Guizotia abyssinica (Niger).